Here is a 103-residue protein sequence, read N- to C-terminus: Large ribosomal subunit protein eL42 (103 aa).

Positions 18 and 21 each coordinate Zn(2+). The segment at 18-81 (CPKCRTHTEH…TVLKLKCSKC (64 aa)) adopts a C4-type zinc-finger fold. A disordered region spans residues 40–62 (LSEGERRYARKKKGYGSKRKPEQ). Positions 47-57 (YARKKKGYGSK) are enriched in basic residues. Cysteine 78 and cysteine 81 together coordinate Zn(2+).

The protein belongs to the eukaryotic ribosomal protein eL42 family. Part of the 50S ribosomal subunit. Zn(2+) is required as a cofactor.

In terms of biological role, binds to the 23S rRNA. This is Large ribosomal subunit protein eL42 from Desulfurococcus amylolyticus (strain DSM 18924 / JCM 16383 / VKM B-2413 / 1221n) (Desulfurococcus kamchatkensis).